The following is a 438-amino-acid chain: Enolase (438 aa).

Residues His159 and Glu168 each contribute to the substrate site. Glu211 (proton donor) is an active-site residue. Asp246, Glu297, and Asp322 together coordinate Mg(2+). Positions 297 and 322 each coordinate substrate. Residue Lys347 is the Proton acceptor of the active site. Residues 374–377 (SHRS) and Lys398 each bind substrate.

The protein belongs to the enolase family. Homodimer. Mg(2+) serves as cofactor.

It is found in the cytoplasm. The catalysed reaction is (2R)-2-phosphoglycerate = phosphoenolpyruvate + H2O. It participates in carbohydrate degradation; glycolysis; pyruvate from D-glyceraldehyde 3-phosphate: step 4/5. In Aspergillus fumigatus (strain ATCC MYA-4609 / CBS 101355 / FGSC A1100 / Af293) (Neosartorya fumigata), this protein is Enolase (enoA).